Consider the following 370-residue polypeptide: Anhydro-N-acetylmuramic acid kinase (370 aa).

ATP is bound at residue 13 to 20 (GTSLDGVD).

The protein belongs to the anhydro-N-acetylmuramic acid kinase family.

The enzyme catalyses 1,6-anhydro-N-acetyl-beta-muramate + ATP + H2O = N-acetyl-D-muramate 6-phosphate + ADP + H(+). The protein operates within amino-sugar metabolism; 1,6-anhydro-N-acetylmuramate degradation. It participates in cell wall biogenesis; peptidoglycan recycling. Functionally, catalyzes the specific phosphorylation of 1,6-anhydro-N-acetylmuramic acid (anhMurNAc) with the simultaneous cleavage of the 1,6-anhydro ring, generating MurNAc-6-P. Is required for the utilization of anhMurNAc either imported from the medium or derived from its own cell wall murein, and thus plays a role in cell wall recycling. In Vibrio cholerae serotype O1 (strain ATCC 39315 / El Tor Inaba N16961), this protein is Anhydro-N-acetylmuramic acid kinase.